The primary structure comprises 435 residues: AP-2 complex subunit mu (435 aa).

At serine 45 the chain carries Phosphoserine. Residue threonine 156 is modified to Phosphothreonine. The MHD domain occupies arginine 170 to arginine 434. A 1,2-diacyl-sn-glycero-3-phospho-(1D-myo-inositol-3,4,5-trisphosphate) contacts are provided by lysine 341, lysine 345, and lysine 354.

The protein belongs to the adaptor complexes medium subunit family. As to quaternary structure, adaptor protein complex 2 (AP-2) is a heterotetramer composed of two large adaptins (alpha-type subunit AP2A1 or AP2A2 and beta-type subunit AP2B1), a medium adaptin (mu-type subunit AP2M1) and a small adaptin (sigma-type subunit AP2S1). Interacts with ATP6V1H and MEGF10. Interacts with EGFR. Interacts with PIP5K1C; tyrosine phosphorylation of PIP5K1C weakens the interaction. Interacts with KIAA0319; required for clathrin-mediated endocytosis of KIAA0319. Interacts with DVL2 (via DEP domain). Interacts with KCNQ1; mediates estrogen-induced internalization via clathrin-coated vesicles. Together with AP2A1 or AP2A2 and AP2B1, it interacts with ADAM10; this interaction facilitates ADAM10 endocytosis from the plasma membrane during long-term potentiation in hippocampal neurons. Probably interacts with ACE2 (via endocytic sorting signal motif); the interaction is inhibited by ACE2 phosphorylation. Interacts with RALBP1; the interaction is direct. Interacts with TMEM106B (via N-terminus). Post-translationally, phosphorylation at Thr-156 increases the affinity of the AP-2 complex for cargo membrane proteins during the initial stages of endocytosis.

It localises to the cell membrane. Its subcellular location is the membrane. The protein localises to the coated pit. Functionally, component of the adaptor protein complex 2 (AP-2). Adaptor protein complexes function in protein transport via transport vesicles in different membrane traffic pathways. Adaptor protein complexes are vesicle coat components and appear to be involved in cargo selection and vesicle formation. AP-2 is involved in clathrin-dependent endocytosis in which cargo proteins are incorporated into vesicles surrounded by clathrin (clathrin-coated vesicles, CCVs) which are destined for fusion with the early endosome. The clathrin lattice serves as a mechanical scaffold but is itself unable to bind directly to membrane components. Clathrin-associated adaptor protein (AP) complexes which can bind directly to both the clathrin lattice and to the lipid and protein components of membranes are considered to be the major clathrin adaptors contributing the CCV formation. AP-2 also serves as a cargo receptor to selectively sort the membrane proteins involved in receptor-mediated endocytosis. AP-2 seems to play a role in the recycling of synaptic vesicle membranes from the presynaptic surface. AP-2 recognizes Y-X-X-[FILMV] (Y-X-X-Phi) and [ED]-X-X-X-L-[LI] endocytosis signal motifs within the cytosolic tails of transmembrane cargo molecules. AP-2 may also play a role in maintaining normal post-endocytic trafficking through the ARF6-regulated, non-clathrin pathway. During long-term potentiation in hippocampal neurons, AP-2 is responsible for the endocytosis of ADAM10. The AP-2 mu subunit binds to transmembrane cargo proteins; it recognizes the Y-X-X-Phi motifs. The surface region interacting with to the Y-X-X-Phi motif is inaccessible in cytosolic AP-2, but becomes accessible through a conformational change following phosphorylation of AP-2 mu subunit at Thr-156 in membrane-associated AP-2. The membrane-specific phosphorylation event appears to involve assembled clathrin which activates the AP-2 mu kinase AAK1. Plays a role in endocytosis of frizzled family members upon Wnt signaling. This Pongo abelii (Sumatran orangutan) protein is AP-2 complex subunit mu (AP2M1).